We begin with the raw amino-acid sequence, 350 residues long: MQRSLDSLAGMATSAFGAGTSAAMRQATSPKTILQHIINFFTCGGIRRRNETQYQELIETMAETLKSSMSDRGAPLPENIILDDVDGCRVEFNLPGENNEAGQVIVRVSKGDNSETREIPLASFEKICRALLFRCEFSLPQDSVILTAQGGMNLKGAVLTGANLTAENLCDADLSGADLEGAILFMADCDGANFKGANLSGASLGDSNLTNACLEDSIMCGATLDRANLTGANLQHTSLLGCSMVECNCSGANMDHANVSGSTLIRADMSGATLKGATIMAAIMEGAVLTRANLQKASFTATNLDGADLSEANLRNTSFKDCTLTDLRTEDATMSTSTQTLFNVFYSENI.

Pentapeptide repeat domains follow at residues 162–201, 202–241, 247–286, and 287–326; these read ANLT…NLSG, ASLG…SLLG, CNCS…IMEG, and AVLT…TLTD.

Interacts with the host kinesin light chain (KLC), a subunit of the kinesin-1 motor complex.

It localises to the secreted. It is found in the host membrane. Effector proteins function to alter host cell physiology and promote bacterial survival in host tissues. Involved in the reorganization of late endosome/lysosome (LE/Lys) compartments in mammalian cells. Necessary and sufficient to link kinesin-1 onto the Salmonella-containing vacuole (SCV) membrane. Required for centrifugal extension of lysosomal glycoprotein-rich membrane tubules, known as Salmonella-induced filaments (Sifs), away from the SCV and toward the cell periphery. Required for virulence, but not for intracellular survival and replication in phagocytic cells. This Salmonella typhi protein is Secreted effector protein PipB2 (pipB2).